Consider the following 33-residue polypeptide: Pardaxin P-1 (33 aa).

The protein belongs to the pardaxin family. As to quaternary structure, in aqueous solution exists as a tetramer.

It localises to the secreted. It is found in the target cell membrane. Its function is as follows. Exhibits unusual shark repellent and surfactant properties. Forms voltage-dependent, ion-permeable channels in membranes. At high concentration causes cell membrane lysis. Causes death in killfish oryzias latipes in 30 minutes at a concentration of 25 micrograms/ml. This chain is Pardaxin P-1, found in Pardachirus pavoninus (Peacock sole).